The sequence spans 410 residues: DNA primase small subunit (410 aa).

Residues E43, D106, and D108 contribute to the active site. Residues C118–W129 carry the Zinc knuckle motif motif.

It belongs to the eukaryotic-type primase small subunit family. Heterodimer of a small subunit and a large subunit.

DNA primase is the polymerase that synthesizes small RNA primers for the Okazaki fragments made during discontinuous DNA replication. The polypeptide is DNA primase small subunit (pri-1) (Caenorhabditis elegans).